A 619-amino-acid polypeptide reads, in one-letter code: Chaperone protein HscA homolog (619 aa).

Belongs to the heat shock protein 70 family.

Functionally, chaperone involved in the maturation of iron-sulfur cluster-containing proteins. Has a low intrinsic ATPase activity which is markedly stimulated by HscB. This chain is Chaperone protein HscA homolog, found in Pseudomonas aeruginosa (strain UCBPP-PA14).